Here is a 293-residue protein sequence, read N- to C-terminus: Small ribosomal subunit biogenesis GTPase RsgA (293 aa).

A CP-type G domain is found at 63 to 223; it reads KNWLVRPPIA…VADTPGFSAL (161 aa). Residues 112-115 and 166-174 each bind GTP; these read NKMD and GQSGVGKSS. Zn(2+) is bound by residues Cys247, Cys252, His254, and Cys260.

Belongs to the TRAFAC class YlqF/YawG GTPase family. RsgA subfamily. As to quaternary structure, monomer. Associates with 30S ribosomal subunit, binds 16S rRNA. It depends on Zn(2+) as a cofactor.

The protein resides in the cytoplasm. Its function is as follows. One of several proteins that assist in the late maturation steps of the functional core of the 30S ribosomal subunit. Helps release RbfA from mature subunits. May play a role in the assembly of ribosomal proteins into the subunit. Circularly permuted GTPase that catalyzes slow GTP hydrolysis, GTPase activity is stimulated by the 30S ribosomal subunit. This chain is Small ribosomal subunit biogenesis GTPase RsgA, found in Geobacillus sp. (strain WCH70).